A 1508-amino-acid chain; its full sequence is Ras guanine nucleotide exchange factor Y (1508 aa).

8 disordered regions span residues 1–73 (MIII…NNNE), 128–182 (KVLS…PKSV), 197–272 (IDNN…YSTS), 396–517 (ILQC…EDED), 565–593 (LSEN…SIPT), 606–727 (LPNI…AEPS), 831–1021 (NVII…SNKE), and 1153–1172 (TNED…TNKN). Low complexity-rich tracts occupy residues 9-22 (NINN…NNNS) and 33-72 (NNNN…NNNN). 2 stretches are compositionally biased toward polar residues: residues 128 to 150 (KVLS…TNTI) and 172 to 182 (DRTSQDIPKSV). The segment covering 199-216 (NNTTNNNSNNNNNSSLST) has biased composition (low complexity). Positions 223-232 (DSLETNPIKD) are enriched in basic and acidic residues. Positions 233–250 (EESEESEESEESKEEEEE) are enriched in acidic residues. Low complexity predominate over residues 255 to 272 (IKTTKTTSETIESSYSTS). Over residues 399 to 409 (CKDDSSSKDQD) the composition is skewed to basic and acidic residues. The span at 413–447 (NNSAGSSGNSSASNSNRNSIAFSSSNHFSSESSQS) shows a compositional bias: low complexity. A compositionally biased stretch (pro residues) spans 465–475 (PQSPSPSPSPP). The segment covering 492–510 (FNQQTNFSVSPTKSPSNEK) has biased composition (polar residues). Composition is skewed to low complexity over residues 574 to 593 (NQPS…SIPT), 606 to 660 (LPNI…LTES), 668 to 687 (NNNN…NNNN), 831 to 855 (NVII…NTVK), 862 to 891 (NKSS…SLTP), 942 to 984 (SLWS…SPPT), 993 to 1019 (ITTG…NNSN), and 1160 to 1172 (SNSN…TNKN). Residues 659–686 (ESLKTRIEENNNNNNNKNINNNNNNNNN) adopt a coiled-coil conformation. One can recognise an N-terminal Ras-GEF domain in the interval 1074–1234 (NRIKVRSASL…IILKIIDRKA (161 aa)). Residues 1278–1508 (DDLEIARQLT…LYKQSKIIEP (231 aa)) enclose the Ras-GEF domain.

Promotes the exchange of Ras-bound GDP by GTP. The sequence is that of Ras guanine nucleotide exchange factor Y (gefY) from Dictyostelium discoideum (Social amoeba).